The chain runs to 146 residues: Hemoglobin subunit beta (146 aa).

N-acetylvaline is present on V1. One can recognise a Globin domain in the interval H2–H146. T12 is modified (phosphothreonine). The residue at position 44 (S44) is a Phosphoserine. Position 59 is an N6-acetyllysine (K59). Residue H63 participates in heme b binding. K82 is subject to N6-acetyllysine. A heme b-binding site is contributed by H92. C93 carries the post-translational modification S-nitrosocysteine. K144 bears the N6-acetyllysine mark.

It belongs to the globin family. In terms of assembly, heterotetramer of two alpha chains and two beta chains. As to expression, red blood cells.

Involved in oxygen transport from the lung to the various peripheral tissues. The polypeptide is Hemoglobin subunit beta (HBB) (Pteropus alecto (Black flying fox)).